Reading from the N-terminus, the 479-residue chain is Flavonol 3-O-glucosyltransferase UGT71C4 (479 aa).

The active-site Proton acceptor is H17. H17 is an an anthocyanidin binding site. The Charge relay role is filled by D127. UDP-alpha-D-glucose-binding residues include T150, A350, Q352, H367, W370, N371, S372, and E375. A390 serves as a coordination point for an anthocyanidin. The UDP-alpha-D-glucose site is built by E391 and Q392.

This sequence belongs to the UDP-glycosyltransferase family.

The enzyme catalyses a flavonol + UDP-alpha-D-glucose = a flavonol 3-O-beta-D-glucoside + UDP + H(+). It carries out the reaction a 7-O-hydroxy-flavonol + UDP-alpha-D-glucose = a flavonol 7-O-beta-D-glucoside + UDP + H(+). Its function is as follows. Possesses quercetin 3-O-glucosyltransferase and 7-O-glucosyltransferase activities in vitro. Also active in vitro on benzoates and benzoate derivatives. The polypeptide is Flavonol 3-O-glucosyltransferase UGT71C4 (Arabidopsis thaliana (Mouse-ear cress)).